We begin with the raw amino-acid sequence, 129 residues long: Aldose 1-epimerase (129 aa).

It belongs to the aldose epimerase family.

It catalyses the reaction alpha-D-glucose = beta-D-glucose. The protein operates within carbohydrate metabolism; hexose metabolism. In terms of biological role, mutarotase converts alpha-aldose to the beta-anomer. It is active on D-glucose, L-arabinose, D-xylose, D-galactose, maltose and lactose. This chain is Aldose 1-epimerase (galM), found in Lactobacillus helveticus (Lactobacillus suntoryeus).